Consider the following 792-residue polypeptide: Protocadherin beta-18 (792 aa).

The N-terminal stretch at 1 to 26 is a signal peptide; it reads MAARGSCVSRQRQVLFLFLLGGLCLA. Cadherin domains lie at 27–133, 134–242, 243–347, 348–451, 452–561, and 568–676; these read GSEL…SPIF, QDKK…APQF, PQEL…APEL, IMSS…APAF, NQTS…APFV, and ASAP…LPEV. N-linked (GlcNAc...) asparagine glycosylation is present at Asn169. N-linked (GlcNAc...) asparagine glycosylation is found at Asn418 and Asn452. The helical transmembrane segment at 693–713 threads the bilayer; it reads VIALASVSSLFLLSVLLFVGV.

The protein localises to the cell membrane. Its function is as follows. Potential calcium-dependent cell-adhesion protein. The sequence is that of Protocadherin beta-18 (Pcdhb18) from Mus musculus (Mouse).